Reading from the N-terminus, the 218-residue chain is Ribosome maturation factor RimM (218 aa).

The PRC barrel domain occupies 141–214 (GELWWDRDLV…HIVVDPPPGL (74 aa)).

Belongs to the RimM family. Binds ribosomal protein uS19.

The protein resides in the cytoplasm. In terms of biological role, an accessory protein needed during the final step in the assembly of 30S ribosomal subunit, possibly for assembly of the head region. Essential for efficient processing of 16S rRNA. May be needed both before and after RbfA during the maturation of 16S rRNA. It has affinity for free ribosomal 30S subunits but not for 70S ribosomes. This is Ribosome maturation factor RimM from Parafrankia sp. (strain EAN1pec).